The primary structure comprises 296 residues: NAD kinase (296 aa).

D72 acts as the Proton acceptor in catalysis. NAD(+) contacts are provided by residues 72–73, 146–147, R157, K174, D176, 187–192, and Q247; these read DG, ND, and TAYALS.

The protein belongs to the NAD kinase family. It depends on a divalent metal cation as a cofactor.

The protein localises to the cytoplasm. It carries out the reaction NAD(+) + ATP = ADP + NADP(+) + H(+). Functionally, involved in the regulation of the intracellular balance of NAD and NADP, and is a key enzyme in the biosynthesis of NADP. Catalyzes specifically the phosphorylation on 2'-hydroxyl of the adenosine moiety of NAD to yield NADP. This chain is NAD kinase, found in Pseudomonas putida (strain W619).